The primary structure comprises 104 residues: Inclusion membrane protein F (104 aa).

2 helical membrane-spanning segments follow: residues 39 to 59 and 70 to 90; these read LVVALAALVLNGALCVLSLVA and LAVLVATTLASFLCAACVLFI.

The protein localises to the secreted. It localises to the host vacuole. It is found in the host pathogen-containing vacuole. The protein resides in the host pathogen-containing vacuole membrane. Inclusion membrane protein probably involved in early modification events of the chlamydial inclusion. The polypeptide is Inclusion membrane protein F (incF) (Chlamydia trachomatis serovar D (strain ATCC VR-885 / DSM 19411 / UW-3/Cx)).